A 79-amino-acid polypeptide reads, in one-letter code: Acyl carrier protein (79 aa).

Residues 2–77 form the Carrier domain; that stretch reads SDIEARVKKI…LAIDYAKSHA (76 aa). Serine 37 is subject to O-(pantetheine 4'-phosphoryl)serine.

The protein belongs to the acyl carrier protein (ACP) family. In terms of processing, 4'-phosphopantetheine is transferred from CoA to a specific serine of apo-ACP by AcpS. This modification is essential for activity because fatty acids are bound in thioester linkage to the sulfhydryl of the prosthetic group.

The protein localises to the cytoplasm. Its pathway is lipid metabolism; fatty acid biosynthesis. Its function is as follows. Carrier of the growing fatty acid chain in fatty acid biosynthesis. In Methylibium petroleiphilum (strain ATCC BAA-1232 / LMG 22953 / PM1), this protein is Acyl carrier protein.